A 503-amino-acid polypeptide reads, in one-letter code: UDP-N-acetylmuramate--L-alanine ligase (503 aa).

120-126 (GTHGKTS) is a binding site for ATP.

It belongs to the MurCDEF family.

Its subcellular location is the cytoplasm. It carries out the reaction UDP-N-acetyl-alpha-D-muramate + L-alanine + ATP = UDP-N-acetyl-alpha-D-muramoyl-L-alanine + ADP + phosphate + H(+). It functions in the pathway cell wall biogenesis; peptidoglycan biosynthesis. Its function is as follows. Cell wall formation. The sequence is that of UDP-N-acetylmuramate--L-alanine ligase from Rhodococcus opacus (strain B4).